The following is an 84-amino-acid chain: Small ribosomal subunit protein uS17 (84 aa).

The protein belongs to the universal ribosomal protein uS17 family. In terms of assembly, part of the 30S ribosomal subunit.

In terms of biological role, one of the primary rRNA binding proteins, it binds specifically to the 5'-end of 16S ribosomal RNA. The sequence is that of Small ribosomal subunit protein uS17 from Buchnera aphidicola subsp. Cinara cedri (strain Cc).